A 760-amino-acid chain; its full sequence is RxLR effector protein PSR2 (760 aa).

A signal peptide spans Met-1–Ala-21. Positions Arg-47–Arg-62 match the RxLR-dEER motif. One copy of the WY1 repeat lies at Pro-87–Asp-134. The 7 X 93 AA tandem repeats stretch occupies residues Pro-87–Gln-760. The LWY2 repeat unit spans residues Pro-135 to Asn-221. An LWY3 repeat occupies Lys-222–Phe-312. Residues Pro-313 to Pro-403 form an LWY4 repeat. One copy of the LWY5 repeat lies at Glu-404–Phe-496. The stretch at Pro-497–Phe-584 is one LWY6 repeat. The LWY7 repeat unit spans residues Pro-585–Gln-760.

Belongs to the RxLR effector family. As to quaternary structure, interacts with host dsRNA-binding protein DRB4.

Its subcellular location is the secreted. It is found in the host cell. In terms of biological role, secreted effector that possesses RNA silencing suppression activity by inhibiting the biogenesis of small RNAs in the host plant to promote enhanced susceptibility of host to the pathogen during infection. Interferes with secondary siRNA production by associating with host dsRNA-binding protein DRB4. Inhibits the host salicylic acid pathway during infection. This is RxLR effector protein PSR2 from Phytophthora infestans (strain T30-4) (Potato late blight agent).